The following is a 663-amino-acid chain: MDIKKRIDELRKIIEYHNDKYYNQDDPEITDYEYDKLYVELRNLENSHPEYKIQSSPTQKVGGTVKRELRKVKHDIPVVSLQDVFSKEEVYSFVEKITSEVTYPKFVVEKKIDGLTVVLRYYNGELKEAITRGDGSIGESVFENILQVKSIPKHIPSKLNYLEIRGEIYMTNENFIKVNEKQEEIGGKIFKNPRNLAAGTIRQLDTSIVKDRNLDIFIFNLEISEGKKFETHSETLEWLSNQGFDVSPNFKICETADEVWNAILDIEESRWDLGYSIDGAVVKVDNLNDRISLGMTSKVPKWTVAFKYPPEQKETVIEDIIVQVSRTGRLNPLALLRPVILANTTISKATLHNQDFIDSKDIRIGDTVIIQKAGDIIPEIIRSIPEKRPDWAKKYIIPDVCPVCNSKTIREPDGVDTRCSNPDCEAQSFRKIGYFVSKDAMNIVGFGQNTVEALMKDGYIKKISDIYILKNYKDALIEKGIIGKEKSVNNLLNAIELSKDNDIDRLITGLGIRNVGKQSAKILAGNFKSMDELAGAAYEQLIELEDFGPTTVPDILEFFNSNAYIELIKKLKEAGVNTISKTLQKKIDNRFLGKTFVITGTLPTMKRDEAAEIIQSFGGKVSGSVSKRTSFVLAGEEAGSKLTKAQQLGISIITEEDLKDMIK.

Residues 31–35 (DYEYD), 80–81 (SL), and Glu-109 each bind NAD(+). Residue Lys-111 is the N6-AMP-lysine intermediate of the active site. The NAD(+) site is built by Arg-132, Glu-167, Lys-283, and Lys-307. Zn(2+)-binding residues include Cys-401, Cys-404, Cys-419, and Cys-424. Residues 586-663 (KIDNRFLGKT…TEEDLKDMIK (78 aa)) form the BRCT domain.

Belongs to the NAD-dependent DNA ligase family. LigA subfamily. Mg(2+) serves as cofactor. Mn(2+) is required as a cofactor.

The catalysed reaction is NAD(+) + (deoxyribonucleotide)n-3'-hydroxyl + 5'-phospho-(deoxyribonucleotide)m = (deoxyribonucleotide)n+m + AMP + beta-nicotinamide D-nucleotide.. In terms of biological role, DNA ligase that catalyzes the formation of phosphodiester linkages between 5'-phosphoryl and 3'-hydroxyl groups in double-stranded DNA using NAD as a coenzyme and as the energy source for the reaction. It is essential for DNA replication and repair of damaged DNA. This chain is DNA ligase, found in Clostridium kluyveri (strain NBRC 12016).